Reading from the N-terminus, the 311-residue chain is MQNYKYDKAIVPESKNGGSPALNNNPRRSGSKRVLLICLDLFCLFMAGLPFLIIETSTIKPYHRGFYCNDESIKYPLKTGETINDAVLCAVGIVIAILAIITGEFYRIYYLKKSRSTIQNPYVAALYKQVGCFLFGCAISQSFTDIAKVSIGRLRPHFLSVCNPDFSQINCSEGYIQNYRCRGDDSKVQEARKSFFSGHASFSMYTMLYLVLYLQARFTWRGARLLRPLLQFTLIMMAFYTGLSRVSDHKHHPSDVLAGFAQGALVACCIVFFVSDLFKTKTTLSLPAPAIRKEILSPVDIIDRNNHHNMM.

At 1–33 (MQNYKYDKAIVPESKNGGSPALNNNPRRSGSKR) the chain is on the cytoplasmic side. Residue Ser19 is modified to Phosphoserine. A helical membrane pass occupies residues 34 to 54 (VLLICLDLFCLFMAGLPFLII). The Extracellular segment spans residues 55–85 (ETSTIKPYHRGFYCNDESIKYPLKTGETIND). A helical membrane pass occupies residues 86–106 (AVLCAVGIVIAILAIITGEFY). Residues 107-122 (RIYYLKKSRSTIQNPY) are Cytoplasmic-facing. Residues 109–110 (YY) carry the Dityrosine basolateral targeting motif motif. The chain crosses the membrane as a helical span at residues 123–143 (VAALYKQVGCFLFGCAISQSF). Over 144–193 (TDIAKVSIGRLRPHFLSVCNPDFSQINCSEGYIQNYRCRGDDSKVQEARK) the chain is Extracellular. A phosphatase sequence motif I region spans residues 148-156 (KVSIGRLRP). N-linked (GlcNAc...) asparagine glycosylation occurs at Asn170. An Integrin-binding motif motif is present at residues 182 to 184 (RGD). A helical membrane pass occupies residues 194–214 (SFFSGHASFSMYTMLYLVLYL). Positions 196 to 199 (FSGH) are phosphatase sequence motif II. His199 (proton donors) is an active-site residue. Residues 215-225 (QARFTWRGARL) lie on the Cytoplasmic side of the membrane. The chain crosses the membrane as a helical span at residues 226-243 (LRPLLQFTLIMMAFYTGL). The interval 244 to 255 (SRVSDHKHHPSD) is phosphatase sequence motif III. Residues 244 to 257 (SRVSDHKHHPSDVL) lie on the Extracellular side of the membrane. His251 functions as the Nucleophile in the catalytic mechanism. The helical transmembrane segment at 258-278 (AGFAQGALVACCIVFFVSDLF) threads the bilayer. Residues 275-311 (SDLFKTKTTLSLPAPAIRKEILSPVDIIDRNNHHNMM) are mediates interaction with CTNND1. Residues 279–311 (KTKTTLSLPAPAIRKEILSPVDIIDRNNHHNMM) are Cytoplasmic-facing.

The protein belongs to the PA-phosphatase related phosphoesterase family. In terms of assembly, forms functional homodimers and homooligomers that are not required for substrate recognition and catalytic activity. Can also form heterooligomers with other PLPP2 and PLPP3. Interacts with CTNND1; negatively regulates the PLPP3-mediated stabilization of beta-catenin/CTNNB1. N-glycosylated. Contains high-mannose oligosaccharides. As to expression, ubiquitously expressed. Highly expressed in heart and placenta.

It localises to the cell membrane. It is found in the basolateral cell membrane. The protein resides in the endoplasmic reticulum membrane. Its subcellular location is the endoplasmic reticulum-Golgi intermediate compartment membrane. The protein localises to the golgi apparatus membrane. It localises to the golgi apparatus. It is found in the trans-Golgi network membrane. The protein resides in the membrane raft. It carries out the reaction a 1,2-diacyl-sn-glycero-3-phosphate + H2O = a 1,2-diacyl-sn-glycerol + phosphate. It catalyses the reaction 1,2-dihexadecanoyl-sn-glycero-3-phosphate + H2O = 1,2-dihexadecanoyl-sn-glycerol + phosphate. The enzyme catalyses 1,2-di-(9Z-octadecenoyl)-sn-glycero-3-phosphate + H2O = 1,2-di-(9Z-octadecenoyl)-sn-glycerol + phosphate. The catalysed reaction is a monoacyl-sn-glycero-3-phosphate + H2O = a monoacylglycerol + phosphate. It carries out the reaction (9Z)-octadecenoyl-sn-glycero-3-phosphate + H2O = (9Z-octadecenoyl)-glycerol + phosphate. It catalyses the reaction sphing-4-enine 1-phosphate + H2O = sphing-4-enine + phosphate. The enzyme catalyses an N-acylsphing-4-enine 1-phosphate + H2O = an N-acylsphing-4-enine + phosphate. The catalysed reaction is N-(octanoyl)-sphing-4-enine-1-phosphate + H2O = N-octanoylsphing-4-enine + phosphate. It carries out the reaction N-(9Z-octadecenoyl)-ethanolamine phosphate + H2O = N-(9Z-octadecenoyl) ethanolamine + phosphate. It functions in the pathway lipid metabolism; phospholipid metabolism. Its activity is regulated as follows. Magnesium-independent phospholipid phosphatase. Insensitive to N-ethylmaleimide. Inhibited by sphingosine, zinc ions and modestly by propanolol. Its function is as follows. Magnesium-independent phospholipid phosphatase of the plasma membrane that catalyzes the dephosphorylation of a variety of glycerolipid and sphingolipid phosphate esters including phosphatidate/PA, lysophosphatidate/LPA, diacylglycerol pyrophosphate/DGPP, sphingosine 1-phosphate/S1P and ceramide 1-phosphate/C1P. Also acts on N-oleoyl ethanolamine phosphate/N-(9Z-octadecenoyl)-ethanolamine phosphate, a potential physiological compound. Has both an extracellular and an intracellular phosphatase activity, allowing the hydrolysis and the cellular uptake of these bioactive lipid mediators from the milieu, regulating signal transduction in different cellular processes. Through the dephosphorylation of extracellular sphingosine-1-phosphate and the regulation of its extra- and intracellular availability, plays a role in vascular homeostasis, regulating endothelial cell migration, adhesion, survival, proliferation and the production of pro-inflammatory cytokines. By maintaining the appropriate levels of this lipid in the cerebellum, also ensure its proper development and function. Through its intracellular lipid phosphatase activity may act in early compartments of the secretory pathway, regulating the formation of Golgi to endoplasmic reticulum retrograde transport carriers. In terms of biological role, independently of this phosphatase activity may also function in the Wnt signaling pathway and the stabilization of beta-catenin/CTNNB1, thereby regulating cell proliferation, migration and differentiation in angiogenesis or yet in tumor growth. Also plays a role in integrin-mediated cell-cell adhesion in angiogenesis. The sequence is that of Phospholipid phosphatase 3 from Homo sapiens (Human).